The sequence spans 356 residues: UDP-N-acetylglucosamine--N-acetylmuramyl-(pentapeptide) pyrophosphoryl-undecaprenol N-acetylglucosamine transferase (356 aa).

UDP-N-acetyl-alpha-D-glucosamine is bound by residues 15–17 (TGG), Asn-127, Arg-163, Ser-191, Ile-244, 263–268 (ALTVSE), and Gln-288.

It belongs to the glycosyltransferase 28 family. MurG subfamily.

Its subcellular location is the cell inner membrane. The enzyme catalyses di-trans,octa-cis-undecaprenyl diphospho-N-acetyl-alpha-D-muramoyl-L-alanyl-D-glutamyl-meso-2,6-diaminopimeloyl-D-alanyl-D-alanine + UDP-N-acetyl-alpha-D-glucosamine = di-trans,octa-cis-undecaprenyl diphospho-[N-acetyl-alpha-D-glucosaminyl-(1-&gt;4)]-N-acetyl-alpha-D-muramoyl-L-alanyl-D-glutamyl-meso-2,6-diaminopimeloyl-D-alanyl-D-alanine + UDP + H(+). It participates in cell wall biogenesis; peptidoglycan biosynthesis. Its function is as follows. Cell wall formation. Catalyzes the transfer of a GlcNAc subunit on undecaprenyl-pyrophosphoryl-MurNAc-pentapeptide (lipid intermediate I) to form undecaprenyl-pyrophosphoryl-MurNAc-(pentapeptide)GlcNAc (lipid intermediate II). This is UDP-N-acetylglucosamine--N-acetylmuramyl-(pentapeptide) pyrophosphoryl-undecaprenol N-acetylglucosamine transferase from Yersinia pseudotuberculosis serotype O:1b (strain IP 31758).